An 802-amino-acid chain; its full sequence is DNA mismatch repair protein MutS (802 aa).

617 to 624 serves as a coordination point for ATP; that stretch reads GPNMGGKS.

It belongs to the DNA mismatch repair MutS family.

Its function is as follows. This protein is involved in the repair of mismatches in DNA. It is possible that it carries out the mismatch recognition step. This protein has a weak ATPase activity. This chain is DNA mismatch repair protein MutS, found in Buchnera aphidicola subsp. Acyrthosiphon pisum (strain 5A).